Here is a 554-residue protein sequence, read N- to C-terminus: Hydroxylamine reductase (554 aa).

4 residues coordinate [2Fe-2S] cluster: C3, C6, C18, and C25. Hybrid [4Fe-2O-2S] cluster-binding residues include H252, E276, C320, C408, C436, C461, E495, and K497. A Cysteine persulfide modification is found at C408.

It belongs to the HCP family. [2Fe-2S] cluster serves as cofactor. Hybrid [4Fe-2O-2S] cluster is required as a cofactor.

The protein localises to the cytoplasm. It catalyses the reaction A + NH4(+) + H2O = hydroxylamine + AH2 + H(+). Its function is as follows. Catalyzes the reduction of hydroxylamine to form NH(3) and H(2)O. The chain is Hydroxylamine reductase from Shewanella baltica (strain OS185).